Consider the following 184-residue polypeptide: uncharacterized protein (184 aa).

Residues 5–27 traverse the membrane as a helical segment; the sequence is YLLATAMFLIVCVYVISETVNLH.

The protein localises to the membrane. This is an uncharacterized protein from Methanocaldococcus jannaschii (strain ATCC 43067 / DSM 2661 / JAL-1 / JCM 10045 / NBRC 100440) (Methanococcus jannaschii).